The primary structure comprises 253 residues: Putative glutamine amidotransferase PB2B2.05 (253 aa).

A Glutamine amidotransferase type-1 domain is found at 5–228 (IIALSVGFSN…INRSKWHMKQ (224 aa)). The active-site Nucleophile is the Cys-100. Catalysis depends on residues His-200 and Glu-202.

The protein localises to the cytoplasm. Its subcellular location is the nucleus. This Schizosaccharomyces pombe (strain 972 / ATCC 24843) (Fission yeast) protein is Putative glutamine amidotransferase PB2B2.05.